We begin with the raw amino-acid sequence, 189 residues long: UPF0301 protein Plut_0637 (189 aa).

It belongs to the UPF0301 (AlgH) family.

This is UPF0301 protein Plut_0637 from Chlorobium luteolum (strain DSM 273 / BCRC 81028 / 2530) (Pelodictyon luteolum).